A 549-amino-acid polypeptide reads, in one-letter code: Dihydroxy-acid dehydratase (549 aa).

Residue D78 coordinates Mg(2+). Position 119 (C119) interacts with [2Fe-2S] cluster. Positions 120 and 121 each coordinate Mg(2+). K121 carries the post-translational modification N6-carboxylysine. C191 provides a ligand contact to [2Fe-2S] cluster. E441 provides a ligand contact to Mg(2+). The Proton acceptor role is filled by S466.

This sequence belongs to the IlvD/Edd family. As to quaternary structure, homodimer. The cofactor is [2Fe-2S] cluster. Requires Mg(2+) as cofactor.

The catalysed reaction is (2R)-2,3-dihydroxy-3-methylbutanoate = 3-methyl-2-oxobutanoate + H2O. The enzyme catalyses (2R,3R)-2,3-dihydroxy-3-methylpentanoate = (S)-3-methyl-2-oxopentanoate + H2O. Its pathway is amino-acid biosynthesis; L-isoleucine biosynthesis; L-isoleucine from 2-oxobutanoate: step 3/4. It functions in the pathway amino-acid biosynthesis; L-valine biosynthesis; L-valine from pyruvate: step 3/4. In terms of biological role, functions in the biosynthesis of branched-chain amino acids. Catalyzes the dehydration of (2R,3R)-2,3-dihydroxy-3-methylpentanoate (2,3-dihydroxy-3-methylvalerate) into 2-oxo-3-methylpentanoate (2-oxo-3-methylvalerate) and of (2R)-2,3-dihydroxy-3-methylbutanoate (2,3-dihydroxyisovalerate) into 2-oxo-3-methylbutanoate (2-oxoisovalerate), the penultimate precursor to L-isoleucine and L-valine, respectively. This is Dihydroxy-acid dehydratase from Methanobrevibacter smithii (strain ATCC 35061 / DSM 861 / OCM 144 / PS).